Consider the following 72-residue polypeptide: Gas vesicle protein A (72 aa).

This sequence belongs to the gas vesicle GvpA family. In terms of assembly, the gas vesicle shell is 2 nm thick and consists of a single layer of this protein. It forms helical ribs nearly perpendicular to the long axis of the vesicle.

The protein resides in the gas vesicle shell. Its function is as follows. Gas vesicles are hollow, gas filled proteinaceous nanostructures found in some microorganisms. During planktonic growth they allow positioning of the organism at a favorable depth for light or nutrient acquisition. GvpA forms the protein shell. This Haloquadratum walsbyi (strain DSM 16790 / HBSQ001) protein is Gas vesicle protein A.